The sequence spans 167 residues: SsrA-binding protein (167 aa).

The tract at residues 139 to 167 (QAHDKRHAEKEREWQRDKQRIMRAHNRNA) is disordered. Residues 144–158 (RHAEKEREWQRDKQR) are compositionally biased toward basic and acidic residues.

It belongs to the SmpB family.

The protein resides in the cytoplasm. Required for rescue of stalled ribosomes mediated by trans-translation. Binds to transfer-messenger RNA (tmRNA), required for stable association of tmRNA with ribosomes. tmRNA and SmpB together mimic tRNA shape, replacing the anticodon stem-loop with SmpB. tmRNA is encoded by the ssrA gene; the 2 termini fold to resemble tRNA(Ala) and it encodes a 'tag peptide', a short internal open reading frame. During trans-translation Ala-aminoacylated tmRNA acts like a tRNA, entering the A-site of stalled ribosomes, displacing the stalled mRNA. The ribosome then switches to translate the ORF on the tmRNA; the nascent peptide is terminated with the 'tag peptide' encoded by the tmRNA and targeted for degradation. The ribosome is freed to recommence translation, which seems to be the essential function of trans-translation. The chain is SsrA-binding protein from Xylella fastidiosa (strain M12).